A 121-amino-acid chain; its full sequence is Oxalate-binding protein (121 aa).

Positions 49 to 117 (RMKLPPGSSV…GNTDLEFLAV (69 aa)) constitute a Cupin type-2 domain. Residues H61, H63, and E68 each coordinate Mn(2+). Residue Y70 coordinates oxalate. Mn(2+) is bound at residue H102.

Homodimer.

In terms of biological role, binds oxalate. The polypeptide is Oxalate-binding protein (Thermotoga maritima (strain ATCC 43589 / DSM 3109 / JCM 10099 / NBRC 100826 / MSB8)).